Here is a 481-residue protein sequence, read N- to C-terminus: Tryptophan 5-hydroxylase (481 aa).

The 76-residue stretch at 56-131 folds into the ACT domain; the sequence is SVIFSLKNEI…NVISMSPPEN (76 aa). Residues Tyr-272, Arg-294, and Thr-302 each coordinate L-tryptophan. Fe cation contacts are provided by His-309, His-314, and Glu-354. L-tryptophan-binding residues include Ser-373 and Ile-403.

This sequence belongs to the biopterin-dependent aromatic amino acid hydroxylase family. In terms of assembly, homotetramer. Fe(2+) serves as cofactor.

The enzyme catalyses (6R)-L-erythro-5,6,7,8-tetrahydrobiopterin + L-tryptophan + O2 = 5-hydroxy-L-tryptophan + (4aS,6R)-4a-hydroxy-L-erythro-5,6,7,8-tetrahydrobiopterin. It participates in aromatic compound metabolism; serotonin biosynthesis; serotonin from L-tryptophan: step 1/2. Its function is as follows. Oxidizes L-tryptophan to 5-hydroxy-l-tryptophan in the rate-determining step of serotonin biosynthesis. This chain is Tryptophan 5-hydroxylase (tph1), found in Xenopus laevis (African clawed frog).